The primary structure comprises 397 residues: Enoyl-[acyl-carrier-protein] reductase [NADH] (397 aa).

Residues Gly48–Tyr53, Phe74–Glu75, Asp111–Ala112, and Val139–Ala140 each bind NAD(+). Residue Tyr225 participates in substrate binding. The Proton donor role is filled by Tyr235. NAD(+) is bound by residues Lys244 and Val273–Thr275.

It belongs to the TER reductase family. As to quaternary structure, monomer.

It carries out the reaction a 2,3-saturated acyl-[ACP] + NAD(+) = a (2E)-enoyl-[ACP] + NADH + H(+). The protein operates within lipid metabolism; fatty acid biosynthesis. In terms of biological role, involved in the final reduction of the elongation cycle of fatty acid synthesis (FAS II). Catalyzes the reduction of a carbon-carbon double bond in an enoyl moiety that is covalently linked to an acyl carrier protein (ACP). This Burkholderia pseudomallei (strain 1106a) protein is Enoyl-[acyl-carrier-protein] reductase [NADH].